Consider the following 183-residue polypeptide: ATP synthase subunit b, chloroplastic (183 aa).

The helical transmembrane segment at 20–42 (INTNVFETNIINLAIVVGTLFYY) threads the bilayer.

This sequence belongs to the ATPase B chain family. F-type ATPases have 2 components, F(1) - the catalytic core - and F(0) - the membrane proton channel. F(1) has five subunits: alpha(3), beta(3), gamma(1), delta(1), epsilon(1). F(0) has four main subunits: a(1), b(1), b'(1) and c(10-14). The alpha and beta chains form an alternating ring which encloses part of the gamma chain. F(1) is attached to F(0) by a central stalk formed by the gamma and epsilon chains, while a peripheral stalk is formed by the delta, b and b' chains.

Its subcellular location is the plastid. It is found in the chloroplast thylakoid membrane. Functionally, f(1)F(0) ATP synthase produces ATP from ADP in the presence of a proton or sodium gradient. F-type ATPases consist of two structural domains, F(1) containing the extramembraneous catalytic core and F(0) containing the membrane proton channel, linked together by a central stalk and a peripheral stalk. During catalysis, ATP synthesis in the catalytic domain of F(1) is coupled via a rotary mechanism of the central stalk subunits to proton translocation. Its function is as follows. Component of the F(0) channel, it forms part of the peripheral stalk, linking F(1) to F(0). The protein is ATP synthase subunit b, chloroplastic of Euglena gracilis.